Here is a 363-residue protein sequence, read N- to C-terminus: MTSELKKTPLYQNYVDSGAKIVEFGGWAMPVQFTSIKEEHNAVRYEVGMFDVSHMGEISIKGNDASKFVQYLLSNDTNNLTDTKAQYTALCNEEGGIIDDLVTYKIGDNDYLLIVNAANTDKDFAWVQKHAPKFDVEVSNVSNQFGQLAVQGPKARDLVSGLVDIDVSEMKPFDFQQNVTLFGKNVILSQSGYTGEDGFEIYCEAKDTVDIWNGFIEHNVVPCGLGARDTLRLEAGLPLHGQDLTESITPYEGGIAFAAKPLIEEDFIGKSVLKDQKENGSERRTVGLELLDKGIARTGYPVLDLDGNEIGEVTSGTQAPSSGKSIAMAIIKRDEFEMGRELLVQVRKRQLKAKIVKKNQIEK.

The protein belongs to the GcvT family. The glycine cleavage system is composed of four proteins: P, T, L and H.

It catalyses the reaction N(6)-[(R)-S(8)-aminomethyldihydrolipoyl]-L-lysyl-[protein] + (6S)-5,6,7,8-tetrahydrofolate = N(6)-[(R)-dihydrolipoyl]-L-lysyl-[protein] + (6R)-5,10-methylene-5,6,7,8-tetrahydrofolate + NH4(+). Its function is as follows. The glycine cleavage system catalyzes the degradation of glycine. The chain is Aminomethyltransferase from Staphylococcus haemolyticus (strain JCSC1435).